Reading from the N-terminus, the 304-residue chain is Non-specific ribonucleoside hydrolase RihC (304 aa).

Residue H233 is part of the active site.

The protein belongs to the IUNH family. RihC subfamily.

In terms of biological role, hydrolyzes both purine and pyrimidine ribonucleosides with a broad-substrate specificity. This chain is Non-specific ribonucleoside hydrolase RihC, found in Escherichia coli (strain 55989 / EAEC).